A 190-amino-acid polypeptide reads, in one-letter code: GTP cyclohydrolase 1 (190 aa).

Residues Cys-79, His-82, and Cys-151 each coordinate Zn(2+).

Belongs to the GTP cyclohydrolase I family. As to quaternary structure, toroid-shaped homodecamer, composed of two pentamers of five dimers.

The enzyme catalyses GTP + H2O = 7,8-dihydroneopterin 3'-triphosphate + formate + H(+). The protein operates within cofactor biosynthesis; 7,8-dihydroneopterin triphosphate biosynthesis; 7,8-dihydroneopterin triphosphate from GTP: step 1/1. The sequence is that of GTP cyclohydrolase 1 from Clostridioides difficile (strain 630) (Peptoclostridium difficile).